Consider the following 545-residue polypeptide: CTP synthase (545 aa).

The tract at residues 1 to 266 (MTTKYIFVTG…DEICVKRFGL (266 aa)) is amidoligase domain. Residue Ser-14 coordinates CTP. Ser-14 contacts UTP. ATP contacts are provided by residues 15–20 (SLGKGI) and Asp-72. Mg(2+) is bound by residues Asp-72 and Glu-140. CTP is bound by residues 147–149 (DIE), 187–192 (KTKPTQ), and Lys-223. Residues 187–192 (KTKPTQ) and Lys-223 each bind UTP. 239–241 (RDV) provides a ligand contact to ATP. Residues 291-542 (IIGMVGKYTE…IKSAIDHQQG (252 aa)) form the Glutamine amidotransferase type-1 domain. Gly-352 serves as a coordination point for L-glutamine. Cys-379 (nucleophile; for glutamine hydrolysis) is an active-site residue. Residues 380–383 (LGMQ), Glu-403, and Arg-470 contribute to the L-glutamine site. Residues His-515 and Glu-517 contribute to the active site.

The protein belongs to the CTP synthase family. Homotetramer.

It catalyses the reaction UTP + L-glutamine + ATP + H2O = CTP + L-glutamate + ADP + phosphate + 2 H(+). The catalysed reaction is L-glutamine + H2O = L-glutamate + NH4(+). The enzyme catalyses UTP + NH4(+) + ATP = CTP + ADP + phosphate + 2 H(+). It functions in the pathway pyrimidine metabolism; CTP biosynthesis via de novo pathway; CTP from UDP: step 2/2. Allosterically activated by GTP, when glutamine is the substrate; GTP has no effect on the reaction when ammonia is the substrate. The allosteric effector GTP functions by stabilizing the protein conformation that binds the tetrahedral intermediate(s) formed during glutamine hydrolysis. Inhibited by the product CTP, via allosteric rather than competitive inhibition. Its function is as follows. Catalyzes the ATP-dependent amination of UTP to CTP with either L-glutamine or ammonia as the source of nitrogen. Regulates intracellular CTP levels through interactions with the four ribonucleotide triphosphates. This is CTP synthase from Psychromonas ingrahamii (strain DSM 17664 / CCUG 51855 / 37).